The sequence spans 337 residues: Probable poly [ADP-ribose] polymerase DDB_G0278045 (337 aa).

The 211-residue stretch at 21-231 (KKWDIIYKQR…NNNKNKNKNN (211 aa)) folds into the PARP catalytic domain. The segment covering 218–242 (NNTNNNNKNKNKNNNKNNNKNIKIQ) has biased composition (low complexity). The segment at 218–247 (NNTNNNNKNKNKNNNKNNNKNIKIQNENKN) is disordered.

It carries out the reaction L-aspartyl-[protein] + NAD(+) = 4-O-(ADP-D-ribosyl)-L-aspartyl-[protein] + nicotinamide. It catalyses the reaction L-glutamyl-[protein] + NAD(+) = 5-O-(ADP-D-ribosyl)-L-glutamyl-[protein] + nicotinamide. The enzyme catalyses NAD(+) + (ADP-D-ribosyl)n-acceptor = nicotinamide + (ADP-D-ribosyl)n+1-acceptor + H(+).. This is Probable poly [ADP-ribose] polymerase DDB_G0278045 from Dictyostelium discoideum (Social amoeba).